The chain runs to 377 residues: cAMP-dependent protein kinase type II regulatory subunit (377 aa).

Over residues 48 to 69 (ERPSVSHTDQSTDDQLSVNSQD) the composition is skewed to polar residues. A disordered region spans residues 48-78 (ERPSVSHTDQSTDDQLSVNSQDADAEPPVMA). Phosphoserine occurs at positions 51, 58, 64, 67, and 84. The short motif at 81-85 (RRKSV) is the Pseudophosphorylation motif element. Tyr90 is subject to Phosphotyrosine. Residues 124-239 (LFRS…LLNS), Glu189, Arg198, 242-362 (MLKA…YESQ), Glu311, and Arg320 contribute to the 3',5'-cyclic AMP site.

This sequence belongs to the cAMP-dependent kinase regulatory chain family. As to quaternary structure, tetramer, composed of 2 regulatory (R) and 2 catalytic (C) subunits. In the presence of cAMP it dissociates into 2 active monomeric C subunits and an R dimer. Interacts with Akap200. Post-translationally, the pseudophosphorylation site binds to the substrate-binding region of the catalytic chain but is not phosphorylated. The physiological significance of phosphorylations by other kinases is unclear. In terms of tissue distribution, detected in follicle cells, germline-derived cells, germline line stem cells and outer rim of ring canals of nurse cells throughout oogenesis (at protein level).

The protein localises to the cytoplasm. Its subcellular location is the cell membrane. Regulatory subunit of the cAMP-dependent protein kinases involved in cAMP signaling in cells. Mediates membrane association by binding to anchoring proteins, such as Akap200. Might play an essential role in the regulation of neuronal activity in the brain. This chain is cAMP-dependent protein kinase type II regulatory subunit (Pka-R2), found in Drosophila melanogaster (Fruit fly).